A 578-amino-acid polypeptide reads, in one-letter code: Putative multidrug export ATP-binding/permease protein SAB1799c (578 aa).

The Cytoplasmic portion of the chain corresponds to 1–15 (MIKRYLQFVKPYKYR). A helical membrane pass occupies residues 16 to 36 (IFATIIVGIIKFGIPMLIPLL). Residues 16-306 (IFATIIVGII…LVASFTTLTQ (291 aa)) enclose the ABC transmembrane type-1 domain. Topologically, residues 37–59 (IKYAIDGVINNHALTTDEKVHHL) are extracellular. Residues 60 to 80 (TIAIGIALFIFVIVRPPIEFI) form a helical membrane-spanning segment. Over 81–138 (RQYLAQWTSNKILYDIRKKLYNHLQALSARFYANNQVGQVISRVINDVEQTKDFILTG) the chain is Cytoplasmic. A helical transmembrane segment spans residues 139-159 (LMNIWLDCITIIIALSIMFFL). Topologically, residues 160–162 (DVK) are extracellular. Residues 163–183 (LTLAALFIFPFYILTVYVFFG) form a helical membrane-spanning segment. Topologically, residues 184–242 (RLRKLTRERSQALAEVQGFLHERVQGISVVKSFAIEDNEAKNFDKKNANFLTRALKHTR) are cytoplasmic. Residues 243–262 (WNAYSFATINTVTDIGPIIV) traverse the membrane as a helical segment. At 263 to 267 (IGVGA) the chain is on the extracellular side. The helical transmembrane segment at 268–287 (YLAISGSITVGTLAAFVGYL) threads the bilayer. At 288–578 (ELLFGPLRRL…YEHLYSIQNL (291 aa)) the chain is on the cytoplasmic side. The ABC transporter domain maps to 340–575 (IDIYHVNFQY…QGAYEHLYSI (236 aa)). An ATP-binding site is contributed by 374–381 (GMSGGGKS).

It belongs to the ABC transporter superfamily. As to quaternary structure, homodimer.

The protein localises to the cell membrane. In terms of biological role, may be involved in multidrug export. Transmembrane domains (TMD) form a pore in the cell membrane and the ATP-binding domain (NBD) is responsible for energy generation. This is Putative multidrug export ATP-binding/permease protein SAB1799c from Staphylococcus aureus (strain bovine RF122 / ET3-1).